The following is a 645-amino-acid chain: tRNA 5-methylaminomethyl-2-thiouridine biosynthesis bifunctional protein MnmC (645 aa).

Positions 1–230 (MPMSEPIDWL…KRHNLHAVFD (230 aa)) are tRNA (mnm(5)s(2)U34)-methyltransferase. The interval 254–645 (LGAGIAGAAA…LASERLGRRR (392 aa)) is FAD-dependent cmnm(5)s(2)U34 oxidoreductase.

This sequence in the N-terminal section; belongs to the methyltransferase superfamily. tRNA (mnm(5)s(2)U34)-methyltransferase family. It in the C-terminal section; belongs to the DAO family. It depends on FAD as a cofactor.

It is found in the cytoplasm. The enzyme catalyses 5-aminomethyl-2-thiouridine(34) in tRNA + S-adenosyl-L-methionine = 5-methylaminomethyl-2-thiouridine(34) in tRNA + S-adenosyl-L-homocysteine + H(+). In terms of biological role, catalyzes the last two steps in the biosynthesis of 5-methylaminomethyl-2-thiouridine (mnm(5)s(2)U) at the wobble position (U34) in tRNA. Catalyzes the FAD-dependent demodification of cmnm(5)s(2)U34 to nm(5)s(2)U34, followed by the transfer of a methyl group from S-adenosyl-L-methionine to nm(5)s(2)U34, to form mnm(5)s(2)U34. This is tRNA 5-methylaminomethyl-2-thiouridine biosynthesis bifunctional protein MnmC from Delftia acidovorans (strain DSM 14801 / SPH-1).